Consider the following 601-residue polypeptide: Elongation factor 4 (601 aa).

The tr-type G domain maps to Lys-7–Asp-189. Residues Asp-19–Thr-24 and Asn-136–Asp-139 each bind GTP.

It belongs to the TRAFAC class translation factor GTPase superfamily. Classic translation factor GTPase family. LepA subfamily.

The protein localises to the cell membrane. It catalyses the reaction GTP + H2O = GDP + phosphate + H(+). In terms of biological role, required for accurate and efficient protein synthesis under certain stress conditions. May act as a fidelity factor of the translation reaction, by catalyzing a one-codon backward translocation of tRNAs on improperly translocated ribosomes. Back-translocation proceeds from a post-translocation (POST) complex to a pre-translocation (PRE) complex, thus giving elongation factor G a second chance to translocate the tRNAs correctly. Binds to ribosomes in a GTP-dependent manner. This Clostridium novyi (strain NT) protein is Elongation factor 4.